Here is a 673-residue protein sequence, read N- to C-terminus: Probable boron transporter 7 (673 aa).

The Cytoplasmic portion of the chain corresponds to 1–35; it reads MEGVKFPFGGIINDFNGRRKCYKQDWLAAFNSGVR. A helical membrane pass occupies residues 36–56; sequence ILAPTLYIFIASALPVIAFGE. Residues 57–75 are Extracellular-facing; the sequence is QLSRETDRSLGIAESLAST. Residues 76-96 form a helical membrane-spanning segment; sequence ALCGIIHSVFGGQPLLIVGVA. Over 97–121 the chain is Cytoplasmic; that stretch reads EPTIIMYTYLHSFSKSRPELGQKLY. The helical transmembrane segment at 122 to 142 threads the bilayer; it reads LAWAGWVCVWTAVLLMLLAML. Topologically, residues 143 to 160 are extracellular; that stretch reads NACNIISRFTRIAGELFG. The helical transmembrane segment at 161 to 181 threads the bilayer; the sequence is MLITVLFIQEAVKGLIGEFLV. The Cytoplasmic portion of the chain corresponds to 182–197; that stretch reads PKSDDPSLEVYQFQWR. A helical membrane pass occupies residues 198–218; the sequence is YTNGLLAVIFSFGLLYTALKS. The Extracellular segment spans residues 219-233; that stretch reads RRARSWKYGFRWMRG. A helical transmembrane segment spans residues 234–254; the sequence is FIGDYGTLLMLVLWSAFSYTV. Topologically, residues 255 to 289 are cytoplasmic; the sequence is PRNLPEGVPRRLELPLPWASESLYHWTVVKDMAKV. A helical membrane pass occupies residues 290 to 310; the sequence is PPLYILAAFIPAIMIAGLYFF. The Extracellular segment spans residues 311 to 330; that stretch reads DHCVSAQMAQQKEFNLKNPT. A helical transmembrane segment spans residues 331–351; the sequence is AYHYDIFILGIMTLICGLLGL. Over 352–468 the chain is Cytoplasmic; sequence PPSNGVIPQS…EQRVSNLLQS (117 aa). Residues 469 to 489 form a helical membrane-spanning segment; the sequence is VLVGLLILAVPVLRMIPTSVL. Over 490-556 the chain is Extracellular; sequence WGYFTYMAVD…QLLYFLICYG (67 aa). The chain crosses the membrane as a helical span at residues 557–577; that stretch reads VTWIPVGGILFPLPFFILIAL. The Cytoplasmic segment spans residues 578–673; the sequence is RQYILQRLFD…SQMVKIYNHS (96 aa).

Belongs to the anion exchanger (TC 2.A.31.3) family.

The protein resides in the membrane. Functionally, putative boron transporter. Boron is essential for maintaining the integrity of plants cell walls. This Arabidopsis thaliana (Mouse-ear cress) protein is Probable boron transporter 7 (BOR7).